A 485-amino-acid chain; its full sequence is E3 ubiquitin-protein ligase TRIM68 (485 aa).

The RING-type zinc-finger motif lies at 16–61 (CPICMTFLREPMSIDCGHSFCHSCLSGLWEIPGESQNWGYTCPLCR). The segment at 93–134 (LKGDLCERHGEKLKMFCKEDVLIMCEACSQSPEHEAHSVVPM) adopts a B box-type zinc-finger fold. Cysteine 98, histidine 101, cysteine 120, and histidine 126 together coordinate Zn(2+). Residues 207-239 (AEVAAALASLQREAAETMQKLELNHSELIQQSQ) adopt a coiled-coil conformation. The B30.2/SPRY domain occupies 285–481 (LKTDCRVLGL…NTAPLAICSL (197 aa)).

This sequence belongs to the TRIM/RBCC family. As to quaternary structure, interacts with AR/androgen receptor (via ligand-binding domain). Interacts with KAT5/TIP60. In terms of processing, auto-ubiquitinated. In terms of tissue distribution, widely expressed. Expressed at high levels in prostate cancer cell lines. Up-regulation could be restricted to androgen-dependent cells.

The protein resides in the cytoplasm. It is found in the perinuclear region. The protein localises to the nucleus. It catalyses the reaction S-ubiquitinyl-[E2 ubiquitin-conjugating enzyme]-L-cysteine + [acceptor protein]-L-lysine = [E2 ubiquitin-conjugating enzyme]-L-cysteine + N(6)-ubiquitinyl-[acceptor protein]-L-lysine.. It participates in protein modification; protein ubiquitination. In terms of biological role, functions as a ubiquitin E3 ligase. Acts as a coactivator of androgen receptor (AR) depending on its ubiquitin ligase activity. In Homo sapiens (Human), this protein is E3 ubiquitin-protein ligase TRIM68 (TRIM68).